Consider the following 339-residue polypeptide: MFYKIAQKVMFQMDPERAHHLAIGSLKMTANSPLTCLYGQTIAPAPVSVMGLTFPNPVGLAAGMDKDGESIDAFHAMGFGHVEVGTVTPRPQPGNDLPRLFRLKPAKGIINRMGFNNKGVDNLVKNLIAKKTDIMVGVNIGKNKDTPVEQGKDDYLICMDKVYLHAAYIAVNISSPNTPGLRSLQYGDLLDELLSAIKTKQLELAEKHKKYVPIALKIAPDLTIEEIENIAQALIKNKFDGAIATNTTLTRDGVSGLANANESGGLSGKPLTELSIKVIKQLAICLKGQIPIIGVGGINSADDALAKFDAGATMVQIYSGFIYQGPKLIKEIVNAYRLK.

Residues 62–66 (AGMDK) and threonine 86 each bind FMN. Lysine 66 is a binding site for substrate. 111–115 (NRMGF) serves as a coordination point for substrate. Residues asparagine 139 and asparagine 172 each coordinate FMN. Residue asparagine 172 coordinates substrate. Residue serine 175 is the Nucleophile of the active site. Asparagine 177 is a substrate binding site. 2 residues coordinate FMN: lysine 217 and threonine 245. A substrate-binding site is contributed by 246-247 (NT). FMN-binding positions include glycine 268, glycine 297, and 318–319 (YS).

This sequence belongs to the dihydroorotate dehydrogenase family. Type 2 subfamily. In terms of assembly, monomer. Requires FMN as cofactor.

The protein resides in the cell membrane. It carries out the reaction (S)-dihydroorotate + a quinone = orotate + a quinol. The protein operates within pyrimidine metabolism; UMP biosynthesis via de novo pathway; orotate from (S)-dihydroorotate (quinone route): step 1/1. Its function is as follows. Catalyzes the conversion of dihydroorotate to orotate with quinone as electron acceptor. This chain is Dihydroorotate dehydrogenase (quinone), found in Shewanella baltica (strain OS155 / ATCC BAA-1091).